Reading from the N-terminus, the 181-residue chain is MENDDITVAEMKPKKRAGRRIFKETRHPIYRGVRRRDGDKWVCEVREPIHQRRVWLGTYPTADMAARAHDVAVLALRGRSACLNFSDSAWRLPVPASTDPDTIRRTAAEAAEMFRPPEFSTGITVLPSASEFDTSDEGVAGMMMRLAEEPLMSPPRSYIDMNTSVYVDEEMCYEDLSLWSY.

The Nuclear localization signal signature appears at K14–R26. The segment at residues I29 to S86 is a DNA-binding region (AP2/ERF).

It belongs to the AP2/ERF transcription factor family. ERF subfamily.

Its subcellular location is the nucleus. In terms of biological role, transcriptional activator that binds specifically to the DNA sequence 5'-[AG]CCGAC-3'. Binding to the C-repeat/DRE element mediates cold or dehydration-inducible transcription. CBF/DREB1 factors play a key role in freezing tolerance and cold acclimation. The sequence is that of Dehydration-responsive element-binding protein 1E (DREB1E) from Arabidopsis thaliana (Mouse-ear cress).